The sequence spans 40 residues: Protamine-2 (40 aa).

The disordered stretch occupies residues 1 to 40 (MPPRRKRVSSAPRRRRRTYRRTTAHKHQERPVHRRRRRRH).

As to expression, testis.

The protein localises to the nucleus. It localises to the chromosome. In terms of biological role, protamines substitute for histones in the chromatin of sperm during the haploid phase of spermatogenesis. They compact sperm DNA into a highly condensed, stable and inactive complex. The sequence is that of Protamine-2 (PBP2) from Bufo japonicus (Japanese common toad).